The following is a 331-amino-acid chain: Tetraacyldisaccharide 4'-kinase (331 aa).

51–58 (TAGGAGKT) is a binding site for ATP.

It belongs to the LpxK family.

It carries out the reaction a lipid A disaccharide + ATP = a lipid IVA + ADP + H(+). It functions in the pathway glycolipid biosynthesis; lipid IV(A) biosynthesis; lipid IV(A) from (3R)-3-hydroxytetradecanoyl-[acyl-carrier-protein] and UDP-N-acetyl-alpha-D-glucosamine: step 6/6. In terms of biological role, transfers the gamma-phosphate of ATP to the 4'-position of a tetraacyldisaccharide 1-phosphate intermediate (termed DS-1-P) to form tetraacyldisaccharide 1,4'-bis-phosphate (lipid IVA). The polypeptide is Tetraacyldisaccharide 4'-kinase (Rhodospirillum rubrum (strain ATCC 11170 / ATH 1.1.1 / DSM 467 / LMG 4362 / NCIMB 8255 / S1)).